The primary structure comprises 199 residues: dTTP/UTP pyrophosphatase (199 aa).

The Proton acceptor role is filled by Asp-78.

Belongs to the Maf family. YhdE subfamily. The cofactor is a divalent metal cation.

It localises to the cytoplasm. The enzyme catalyses dTTP + H2O = dTMP + diphosphate + H(+). It catalyses the reaction UTP + H2O = UMP + diphosphate + H(+). In terms of biological role, nucleoside triphosphate pyrophosphatase that hydrolyzes dTTP and UTP. May have a dual role in cell division arrest and in preventing the incorporation of modified nucleotides into cellular nucleic acids. This is dTTP/UTP pyrophosphatase from Clostridium acetobutylicum (strain ATCC 824 / DSM 792 / JCM 1419 / IAM 19013 / LMG 5710 / NBRC 13948 / NRRL B-527 / VKM B-1787 / 2291 / W).